Consider the following 351-residue polypeptide: Protein RecA (351 aa).

67–74 is a binding site for ATP; the sequence is GPESSGKT.

Belongs to the RecA family.

The protein localises to the cytoplasm. In terms of biological role, can catalyze the hydrolysis of ATP in the presence of single-stranded DNA, the ATP-dependent uptake of single-stranded DNA by duplex DNA, and the ATP-dependent hybridization of homologous single-stranded DNAs. It interacts with LexA causing its activation and leading to its autocatalytic cleavage. The chain is Protein RecA from Mannheimia succiniciproducens (strain KCTC 0769BP / MBEL55E).